The primary structure comprises 579 residues: Protein O-linked-mannose beta-1,4-N-acetylglucosaminyltransferase 2 (579 aa).

The Cytoplasmic portion of the chain corresponds to 1–4; sequence MGVG. A helical; Signal-anchor for type II membrane protein transmembrane segment spans residues 5–25; the sequence is TLLNGLLVSVVAALLWKYSKL. Over 26–579 the chain is Lumenal; that stretch reads SEHAALLEEE…PFADVLMCRT (554 aa). N-linked (GlcNAc...) asparagine glycosylation is found at Asn98, Asn275, and Asn542. The Fibronectin type-III domain occupies 480-579; sequence HPGRVRDARC…PFADVLMCRT (100 aa).

The protein belongs to the glycosyltransferase 61 family.

It is found in the endoplasmic reticulum membrane. The catalysed reaction is 3-O-(alpha-D-mannosyl)-L-threonyl-[protein] + UDP-N-acetyl-alpha-D-glucosamine = 3-O-(N-acetyl-beta-D-glucosaminyl-(1-&gt;4)-alpha-D-mannosyl)-L-threonyl-[protein] + UDP + H(+). It functions in the pathway protein modification; protein glycosylation. Its function is as follows. O-linked mannose beta-1,4-N-acetylglucosaminyltransferase that transfers UDP-N-acetyl-D-glucosamine to the 4-position of the mannose to generate N-acetyl-D-glucosamine-beta-1,4-O-D-mannosylprotein. Involved in the biosynthesis of the phosphorylated O-mannosyl trisaccharide (N-acetylgalactosamine-beta-3-N-acetylglucosamine-beta-4-(phosphate-6-)mannose), a carbohydrate structure present in alpha-dystroglycan (DAG1), which is required for binding laminin G-like domain-containing extracellular proteins with high affinity. The chain is Protein O-linked-mannose beta-1,4-N-acetylglucosaminyltransferase 2 (pomgnt2) from Tetraodon nigroviridis (Spotted green pufferfish).